A 1096-amino-acid chain; its full sequence is Cation-transporting ATPase 5 (1096 aa).

Over 1-19 (MDSIELKQLVPENDSEPGT) the chain is Cytoplasmic. Residues 20-41 (PRQLLFQHYDISNEETIGIKPF) form a helical membrane-spanning segment. The Lumenal segment spans residues 42–47 (KSIPAK). A helical membrane pass occupies residues 48–70 (VYILRVTEILTLGLLHLILTWLP). Residues 71-193 (EFRLKWIEAP…LVSTKKSIVT (123 aa)) are Cytoplasmic-facing. A helical transmembrane segment spans residues 194–216 (ILLNEVLHPFYLFQAVSVLIWLC). The Lumenal segment spans residues 217–220 (DSFV). The helical transmembrane segment at 221-238 (FYSCCIVFISSYSIFLSV) threads the bilayer. The Cytoplasmic segment spans residues 239 to 391 (KESKESENRI…NLRPSQLYLD (153 aa)). The helical transmembrane segment at 392–412 (SMSFLKTMAILSFVSIVFIAI) threads the bilayer. The Lumenal segment spans residues 413 to 425 (YLNLYNASFGHVV). The chain crosses the membrane as a helical span at residues 426 to 447 (LRSLDVLTILVPPALPATLSVG). Residues 448–895 (IANSIARLSR…SLILSHRCFQ (448 aa)) are Cytoplasmic-facing. Asp480 acts as the 4-aspartylphosphate intermediate in catalysis. Residues Asp838 and Asp842 each coordinate Mg(2+). Residues 896–915 (YMVLCAIVQFSGVFFLYLKN) form a helical membrane-spanning segment. At 916–922 (YNFNDNQ) the chain is on the lumenal side. A helical membrane pass occupies residues 923 to 940 (FLFMDLLIIFPLSAAMSY). At 941–958 (FDPAQNLTSNRPNSTLFG) the chain is on the cytoplasmic side. A helical membrane pass occupies residues 959 to 982 (KGRVKDLGIQSVLIWLSHGLLTLI). At 983–1003 (LHELNWVELPEWQLEKSNTKN) the chain is on the lumenal side. The chain crosses the membrane as a helical span at residues 1004-1026 (VLVTSIFLLSSLQYLGICIGINQ). The Cytoplasmic portion of the chain corresponds to 1027 to 1040 (SSEFLSPIWKKKTY). A helical transmembrane segment spans residues 1041-1060 (VCLCTTIGLCNIYLCFANEN). Residues 1061 to 1075 (HIISRCLQITRLPTL) lie on the Lumenal side of the membrane. The chain crosses the membrane as a helical span at residues 1076–1096 (YRFIILFMGVISCCLTSILNM).

Belongs to the cation transport ATPase (P-type) (TC 3.A.3) family. Type V subfamily.

Its subcellular location is the endoplasmic reticulum membrane. The protein resides in the golgi apparatus membrane. It carries out the reaction ATP + H2O = ADP + phosphate + H(+). Plays a role in regulating calcium and manganese homeostasis responsible for cell cycle progression. This Schizosaccharomyces pombe (strain 972 / ATCC 24843) (Fission yeast) protein is Cation-transporting ATPase 5 (cta5).